A 331-amino-acid polypeptide reads, in one-letter code: L-lactate dehydrogenase A chain (331 aa).

NAD(+) contacts are provided by residues 29–57 (GMVGMASAISILLKDLCDELAMVDVMEDK) and R98. The substrate site is built by R105, N137, and R168. Position 137 (N137) interacts with NAD(+). The Proton acceptor role is filled by H192. Residue T247 participates in substrate binding.

This sequence belongs to the LDH/MDH superfamily. LDH family. Homotetramer.

It is found in the cytoplasm. It carries out the reaction (S)-lactate + NAD(+) = pyruvate + NADH + H(+). Its pathway is fermentation; pyruvate fermentation to lactate; (S)-lactate from pyruvate: step 1/1. In terms of biological role, interconverts simultaneously and stereospecifically pyruvate and lactate with concomitant interconversion of NADH and NAD(+). The protein is L-lactate dehydrogenase A chain (ldha) of Champsocephalus gunnari (Mackerel icefish).